Reading from the N-terminus, the 646-residue chain is mRNA 3'-end-processing protein RNA14 (646 aa).

HAT repeat units lie at residues 46–78, 80–114, 128–160, 171–204, 249–281, and 290–322; these read DDYD…SELQ, NEFD…YVRR, VVIK…FLHQ, QRLD…WEQE, ANKN…WEKE, and ALKD…YEFD. The interval 571–599 is disordered; the sequence is DGDPSGVDKSFKKRQIENDENLPDSKRQK.

Its subcellular location is the nucleus. The protein localises to the cytoplasm. Component of the cleavage factor IA (CFIA) complex, which is involved in the endonucleolytic cleavage during polyadenylation-dependent pre-mRNA 3'-end formation. The polypeptide is mRNA 3'-end-processing protein RNA14 (RNA14) (Candida glabrata (strain ATCC 2001 / BCRC 20586 / JCM 3761 / NBRC 0622 / NRRL Y-65 / CBS 138) (Yeast)).